Here is a 297-residue protein sequence, read N- to C-terminus: D-aminoacyl-tRNA deacylase (297 aa).

The protein belongs to the DtdA deacylase family. As to quaternary structure, monomer. Zn(2+) is required as a cofactor.

The enzyme catalyses a D-aminoacyl-tRNA + H2O = a tRNA + a D-alpha-amino acid + H(+). It catalyses the reaction glycyl-tRNA(Ala) + H2O = tRNA(Ala) + glycine + H(+). D-aminoacyl-tRNA deacylase with broad substrate specificity. By recycling D-aminoacyl-tRNA to D-amino acids and free tRNA molecules, this enzyme counteracts the toxicity associated with the formation of D-aminoacyl-tRNA entities in vivo. This chain is D-aminoacyl-tRNA deacylase, found in Methanosarcina mazei (strain ATCC BAA-159 / DSM 3647 / Goe1 / Go1 / JCM 11833 / OCM 88) (Methanosarcina frisia).